A 171-amino-acid chain; its full sequence is Inosine/xanthosine triphosphatase (171 aa).

Position 8–13 (8–13 (TTNPAK)) interacts with substrate. Residues aspartate 38 and glutamine 68 each contribute to the Mg(2+) site.

Belongs to the YjjX NTPase family. In terms of assembly, homodimer. Mg(2+) serves as cofactor. Requires Mn(2+) as cofactor.

It carries out the reaction XTP + H2O = XDP + phosphate + H(+). The enzyme catalyses ITP + H2O = IDP + phosphate + H(+). Functionally, phosphatase that hydrolyzes non-canonical purine nucleotides such as XTP and ITP to their respective diphosphate derivatives. Probably excludes non-canonical purines from DNA/RNA precursor pool, thus preventing their incorporation into DNA/RNA and avoiding chromosomal lesions. This chain is Inosine/xanthosine triphosphatase, found in Cronobacter sakazakii (strain ATCC BAA-894) (Enterobacter sakazakii).